Consider the following 82-residue polypeptide: Escargot/snail protein homolog (82 aa).

4 consecutive C2H2-type zinc fingers follow at residues 1-5, 18-40, 44-66, and 72-82; these read HQQFH, FSCKNCDKTYVSLGALKMHIRTH, CKCPICGKAFSRPWLLQGHIRTH, and FSCQHCQSAFV.

It belongs to the snail C2H2-type zinc-finger protein family.

The protein localises to the nucleus. The protein is Escargot/snail protein homolog of Calliphora vicina (Blue blowfly).